The primary structure comprises 100 residues: Aspartyl/glutamyl-tRNA(Asn/Gln) amidotransferase subunit C (100 aa).

The protein belongs to the GatC family. As to quaternary structure, heterotrimer of A, B and C subunits.

The catalysed reaction is L-glutamyl-tRNA(Gln) + L-glutamine + ATP + H2O = L-glutaminyl-tRNA(Gln) + L-glutamate + ADP + phosphate + H(+). The enzyme catalyses L-aspartyl-tRNA(Asn) + L-glutamine + ATP + H2O = L-asparaginyl-tRNA(Asn) + L-glutamate + ADP + phosphate + 2 H(+). Allows the formation of correctly charged Asn-tRNA(Asn) or Gln-tRNA(Gln) through the transamidation of misacylated Asp-tRNA(Asn) or Glu-tRNA(Gln) in organisms which lack either or both of asparaginyl-tRNA or glutaminyl-tRNA synthetases. The reaction takes place in the presence of glutamine and ATP through an activated phospho-Asp-tRNA(Asn) or phospho-Glu-tRNA(Gln). The polypeptide is Aspartyl/glutamyl-tRNA(Asn/Gln) amidotransferase subunit C (Streptococcus uberis (strain ATCC BAA-854 / 0140J)).